A 151-amino-acid chain; its full sequence is Deoxyuridine 5'-triphosphate nucleotidohydrolase (151 aa).

Substrate is bound by residues 70 to 72 (RSG), N83, 87 to 89 (LID), and M97.

It belongs to the dUTPase family. The cofactor is Mg(2+).

The catalysed reaction is dUTP + H2O = dUMP + diphosphate + H(+). Its pathway is pyrimidine metabolism; dUMP biosynthesis; dUMP from dCTP (dUTP route): step 2/2. In terms of biological role, this enzyme is involved in nucleotide metabolism: it produces dUMP, the immediate precursor of thymidine nucleotides and it decreases the intracellular concentration of dUTP so that uracil cannot be incorporated into DNA. This chain is Deoxyuridine 5'-triphosphate nucleotidohydrolase, found in Pseudomonas syringae pv. syringae (strain B728a).